Here is a 453-residue protein sequence, read N- to C-terminus: Tubulin beta-2 chain (453 aa).

Positions 11, 71, 140, 144, 145, 146, 206, and 228 each coordinate GTP. Glu-71 serves as a coordination point for Mg(2+).

It belongs to the tubulin family. As to quaternary structure, dimer of alpha and beta chains. A typical microtubule is a hollow water-filled tube with an outer diameter of 25 nm and an inner diameter of 15 nM. Alpha-beta heterodimers associate head-to-tail to form protofilaments running lengthwise along the microtubule wall with the beta-tubulin subunit facing the microtubule plus end conferring a structural polarity. Microtubules usually have 13 protofilaments but different protofilament numbers can be found in some organisms and specialized cells. Requires Mg(2+) as cofactor.

It localises to the cytoplasm. The protein localises to the cytoskeleton. Tubulin is the major constituent of microtubules, a cylinder consisting of laterally associated linear protofilaments composed of alpha- and beta-tubulin heterodimers. Microtubules grow by the addition of GTP-tubulin dimers to the microtubule end, where a stabilizing cap forms. Below the cap, tubulin dimers are in GDP-bound state, owing to GTPase activity of alpha-tubulin. The chain is Tubulin beta-2 chain from Geotrichum candidum (Oospora lactis).